Here is a 246-residue protein sequence, read N- to C-terminus: Thiamine import ATP-binding protein ThiQ (246 aa).

Residues 10 to 239 form the ABC transporter domain; sequence VKLDALAFAY…QGPPAFARYL (230 aa). Residue 41-48 coordinates ATP; it reads GPSGSGKS.

Belongs to the ABC transporter superfamily. Thiamine importer (TC 3.A.1.19.1) family. As to quaternary structure, the complex is composed of two ATP-binding proteins (ThiQ), two transmembrane proteins (ThiP) and a solute-binding protein (ThiB).

Its subcellular location is the cell inner membrane. It catalyses the reaction thiamine(out) + ATP + H2O = thiamine(in) + ADP + phosphate + H(+). Part of the ABC transporter complex ThiBPQ involved in thiamine import. Responsible for energy coupling to the transport system. The chain is Thiamine import ATP-binding protein ThiQ from Chelativorans sp. (strain BNC1).